The following is a 105-amino-acid chain: MATLQQQKIRIRLKAFDRRLLDTSCEKIVDTANRTNATAIGPIPLPTKRKIYCVLRSPHVDKDSREHFETRTHRRIIDIYQPSSKTIDALMKLDLPAGVDIEVKL.

This sequence belongs to the universal ribosomal protein uS10 family. Part of the 30S ribosomal subunit.

Its function is as follows. Involved in the binding of tRNA to the ribosomes. The protein is Small ribosomal subunit protein uS10 of Picosynechococcus sp. (strain ATCC 27264 / PCC 7002 / PR-6) (Agmenellum quadruplicatum).